A 574-amino-acid polypeptide reads, in one-letter code: Sodium/hydrogen exchanger 8 (574 aa).

The next 11 helical transmembrane spans lie at 53–73 (MTIF…HLLI), 77–97 (LHFL…GAFI), 116–136 (PNMF…YSLH), 149–169 (LFSV…IYFL), 184–204 (FAFG…IFNA), 254–274 (LGYF…TGLI), 304–324 (GLAE…GIVM), 347–367 (VAFM…FSFP), 373–393 (SFVI…IFPL), 410–430 (MFIM…SLHL), and 444–464 (TTII…MPLI).

Belongs to the monovalent cation:proton antiporter 1 (CPA1) transporter (TC 2.A.36) family.

The protein resides in the golgi apparatus membrane. Its function is as follows. Involved in pH regulation to eliminate acids generated by active metabolism or to counter adverse environmental conditions. Major proton extruding system driven by the inward sodium ion chemical gradient. Plays an important role in signal transduction. This is Sodium/hydrogen exchanger 8 from Gallus gallus (Chicken).